A 386-amino-acid chain; its full sequence is Cytochrome b (386 aa).

The next 4 helical transmembrane spans lie at 32-52 (FGSL…TLAM), 76-98 (WMIR…LHIG), 113-133 (PWSI…LGYV), and 179-199 (FFSL…MHLL). Heme b-binding residues include histidine 82 and histidine 96. Residues histidine 183 and histidine 197 each contribute to the heme b site. Position 202 (histidine 202) interacts with a ubiquinone. The next 4 helical transmembrane spans lie at 225 to 245 (YTFK…LFLF), 289 to 309 (LGGV…PLLD), 321 to 341 (LMKF…WCGS), and 348 to 368 (FITL…IIVP).

Belongs to the cytochrome b family. In terms of assembly, fungal cytochrome b-c1 complex contains 10 subunits; 3 respiratory subunits, 2 core proteins and 5 low-molecular weight proteins. Cytochrome b-c1 complex is a homodimer. The cofactor is heme b.

The protein resides in the mitochondrion inner membrane. In terms of biological role, component of the ubiquinol-cytochrome c reductase complex (complex III or cytochrome b-c1 complex) that is part of the mitochondrial respiratory chain. The b-c1 complex mediates electron transfer from ubiquinol to cytochrome c. Contributes to the generation of a proton gradient across the mitochondrial membrane that is then used for ATP synthesis. In Rhizopus oryzae (Mucormycosis agent), this protein is Cytochrome b (cob).